Reading from the N-terminus, the 781-residue chain is Isoquinoline 1-oxidoreductase subunit beta (781 aa).

As to quaternary structure, heterodimer of an alpha chain and a beta chain.

The catalysed reaction is isoquinoline + A + H2O = isoquinolin-1(2H)-one + AH2. Functionally, specific towards N-containing N-heterocyclic substrates, including isoquinoline, isoquinolin-5-ol, phthalazine and quinazoline. This Brevundimonas diminuta (Pseudomonas diminuta) protein is Isoquinoline 1-oxidoreductase subunit beta (iorB).